The following is a 235-amino-acid chain: 2,3,4,5-tetrahydropyridine-2,6-dicarboxylate N-acetyltransferase (235 aa).

The protein belongs to the transferase hexapeptide repeat family. DapH subfamily.

It catalyses the reaction (S)-2,3,4,5-tetrahydrodipicolinate + acetyl-CoA + H2O = L-2-acetamido-6-oxoheptanedioate + CoA. Its pathway is amino-acid biosynthesis; L-lysine biosynthesis via DAP pathway; LL-2,6-diaminopimelate from (S)-tetrahydrodipicolinate (acetylase route): step 1/3. Its function is as follows. Catalyzes the transfer of an acetyl group from acetyl-CoA to tetrahydrodipicolinate. The polypeptide is 2,3,4,5-tetrahydropyridine-2,6-dicarboxylate N-acetyltransferase (Exiguobacterium sibiricum (strain DSM 17290 / CCUG 55495 / CIP 109462 / JCM 13490 / 255-15)).